The sequence spans 455 residues: MEENFEPYTPQLLKNPLSYSDLVKKGVEFEVDNSQQNHARDLGLDSDSDSDYEDALDVDGEELRSPWTYSFDELRALMSEIDENIYKRITRTGHVDREAVPNKARVSVRYSGYWEGETAPFDSSLLRGSKFVFETGQGTVVEGLEVAVRSMRPYEQAEFIISYKLLFGELGCPPRIKPKADALFKVEVIDYSLIGDAKGIDAIPQEDRDKFCVVYPKAVDLHLHGKDSVKLGRYQSAATAFERAVSSLNYCRMANDEEERKQTELLTTLNQNLMIVYNKMNKPKRACIMMKALRHLTMGNPSCKALFQEGRALAALGEYNLARNAYLQAQAKQPANKEISDEIISMNKRISKYEEASRDIWARAFSLKNSKSDVRKTPAQLEKEAKEQDFNDKMEDLIRRFKNTSDQQVSFSRKSYSNAQFDATCKLAKEHNLKLTLSPIQEDVLTLSKPDVKFA.

Residues 34-54 are disordered; sequence SQQNHARDLGLDSDSDSDYED. Over residues 44 to 54 the composition is skewed to acidic residues; that stretch reads LDSDSDSDYED. Residues 103 to 192 form the PPIase FKBP-type domain; the sequence is KARVSVRYSG…LFKVEVIDYS (90 aa). TPR repeat units lie at residues 218–251 and 303–336; these read AVDL…LNYC and CKAL…QPAN.

This sequence belongs to the FKBP6 family. As to quaternary structure, interacts with Hsp83. Strongly expressed in the germline stem cells and in 16-cell cysts. Present in the germ cells throughout embryogenesis. Defects are due to derepression of transposable elements and impaired piRNA biogenesis.

Its subcellular location is the cytoplasm. It is found in the cytoplasmic ribonucleoprotein granule. Co-chaperone required during oogenesis to repress transposable elements and prevent their mobilization, which is essential for the germline integrity. Acts via the piRNA metabolic process, which mediates the repression of transposable elements during meiosis by forming complexes composed of piRNAs and Piwi proteins and govern the methylation and subsequent repression of transposons. Acts as a co-chaperone via its interaction with Hsp83/HSP90 and is required for the biogenesis of all three piRNA major populations. The sequence is that of Inactive peptidyl-prolyl cis-trans isomerase shutdown from Drosophila melanogaster (Fruit fly).